The primary structure comprises 403 residues: MSKFNRIHLVVLDSVGIGAAPDANNFVNAGVPDGASDTLGHISKTVGLNVPNMAKIGLGNIPRETPLKTVAAESNPTGYATKLEEVSLGKDTMTGHWEIMGLNITEPFDTFWNGFPEEILTKIEEFSGRKVIREANKPYSGTAVIYDFGPRQMETGELIIYTSADPVLQIAAHEDIIPLDELYRICEYARSITLERPALLGRIIARPYVGEPGNFTRTANRRDLAVSPFFPTVLDKLNEAGIDTYAVGKINDIFNGAGINHDMGHNKSNSHGIDTLLKTMGLAEFEKGFSFTNLVDFDALYGHRRNAHGYRDCLHEFDERLPEIIAAMRENDLLLITADHGNDPTYAGTDHTREYIPLLAYSPAFKGNGLIPVGHFADISATVADNFGVETAMIGESFLDKLV.

Positions 13, 298, 303, 339, 340, and 351 each coordinate Mn(2+).

The protein belongs to the phosphopentomutase family. Mn(2+) serves as cofactor.

It is found in the cytoplasm. It carries out the reaction 2-deoxy-alpha-D-ribose 1-phosphate = 2-deoxy-D-ribose 5-phosphate. The catalysed reaction is alpha-D-ribose 1-phosphate = D-ribose 5-phosphate. It functions in the pathway carbohydrate degradation; 2-deoxy-D-ribose 1-phosphate degradation; D-glyceraldehyde 3-phosphate and acetaldehyde from 2-deoxy-alpha-D-ribose 1-phosphate: step 1/2. Its function is as follows. Isomerase that catalyzes the conversion of deoxy-ribose 1-phosphate (dRib-1-P) and ribose 1-phosphate (Rib-1-P) to deoxy-ribose 5-phosphate (dRib-5-P) and ribose 5-phosphate (Rib-5-P), respectively. This chain is Phosphopentomutase, found in Streptococcus pneumoniae serotype 4 (strain ATCC BAA-334 / TIGR4).